The following is a 236-amino-acid chain: Chorionic somatomammotropin hormone (236 aa).

An N-terminal signal peptide occupies residues 1–36; it reads MAPASSHREHQWTCNLVRGSRLLLLLVVSNLILCQG. Cystine bridges form between Cys-44-Cys-51, Cys-97-Cys-212, and Cys-229-Cys-234.

The protein belongs to the somatotropin/prolactin family.

The protein resides in the secreted. The chain is Chorionic somatomammotropin hormone (CSH) from Ovis aries (Sheep).